Consider the following 64-residue polypeptide: Large ribosomal subunit protein bL35 (64 aa).

A disordered region spans residues 1-56 (MPKMKSNKSVAARFKLTGSGQLKRTRPGKRHKLSKKSSQEKRNLSKQPLVDKGQVG). Over residues 23 to 35 (KRTRPGKRHKLSK) the composition is skewed to basic residues.

Belongs to the bacterial ribosomal protein bL35 family.

This is Large ribosomal subunit protein bL35 from Chlamydia abortus (strain DSM 27085 / S26/3) (Chlamydophila abortus).